Reading from the N-terminus, the 548-residue chain is Calcium-transporting ATPase (548 aa).

Residues 1–21 form the signal peptide; that stretch reads MNFKSTVITAMCCFFSFAVLA. The a divalent metal cation site is built by Asp37 and Thr78. The Phosphothreonine intermediate role is filled by Thr78. Residues Asn99 and 160–162 contribute to the substrate site; that span reads KDR. The ATP-binding motif lies at 179-187; sequence DGKTGDWIT. A divalent metal cation contacts are provided by Asp305, His309, Asp352, His353, and His488.

Mg(2+) is required as a cofactor.

It localises to the cell inner membrane. It carries out the reaction Ca(2+)(in) + ATP + H2O = Ca(2+)(out) + ADP + phosphate + H(+). Its activity is regulated as follows. Completely inhibited by vanadate(3-). Also inhibited by lanthanoid atom and phosphate. Not inhibited by N-ethylmaleimide, 1,3-dicyclohexylcarbodiimide, oligomycin, ouabain, valinomycin, nigericin, thapsigargin, cyclopiazonic acid or fluorescein isothiocyanate. Functionally, catalyzes the hydrolysis of ATP coupled with the transport of calcium. Has some hydrolysis activity also with dATP, GTP, UTP, ITP and 4-nitrophenyl phosphate as substrate. No activity with ADP, CTP, acetyl dihydrogen phosphate or AMP-PNP as substrate. This chain is Calcium-transporting ATPase, found in Myroides odoratus (Flavobacterium odoratum).